An 80-amino-acid polypeptide reads, in one-letter code: Exodeoxyribonuclease 7 small subunit (80 aa).

It belongs to the XseB family. In terms of assembly, heterooligomer composed of large and small subunits.

The protein localises to the cytoplasm. It catalyses the reaction Exonucleolytic cleavage in either 5'- to 3'- or 3'- to 5'-direction to yield nucleoside 5'-phosphates.. Functionally, bidirectionally degrades single-stranded DNA into large acid-insoluble oligonucleotides, which are then degraded further into small acid-soluble oligonucleotides. In Pseudomonas fluorescens (strain Pf0-1), this protein is Exodeoxyribonuclease 7 small subunit.